We begin with the raw amino-acid sequence, 132 residues long: Small ribosomal subunit protein uS8 (132 aa).

Belongs to the universal ribosomal protein uS8 family. Part of the 30S ribosomal subunit. Contacts proteins S5 and S12.

Functionally, one of the primary rRNA binding proteins, it binds directly to 16S rRNA central domain where it helps coordinate assembly of the platform of the 30S subunit. The chain is Small ribosomal subunit protein uS8 from Borrelia garinii subsp. bavariensis (strain ATCC BAA-2496 / DSM 23469 / PBi) (Borreliella bavariensis).